Reading from the N-terminus, the 531-residue chain is MRDRTQCVAVPTQAFNEILDQDGQLTAYAQRLEQLRERGSHRVALLRGELARIRQDQVLGMPEKRVQVAAHRLKISEAQAVARQCKTEETQLVRKAVARVRGLFRDFDCSVRDAMREQRLLLKQVATVQHTSASSDQREHCLAQLRQCKEARHHAYRSLVEKSAALRNGKMTFIERVVRALREYSFNFDATQFFLANGLYIAIAVFFIACIVVAPFSGNGNLLTIPNILTILEQSSVRMFYAVGVAGIILLAGTDLSIGRMVAMGSVVTGIILHPGQNIVTFFGLGPWDFTPVPMAVRVVMSLAVSVALCVSFSLFAGFFSARLKIHPFISTLATQLIIYGVLFFGTSGTPVGSIDPYIKDLFGGRWILGTMQGTLVTFPKLIIPATIAVAIAWFIWNKTILGKNMYAVGGNAEAANVSGISVFGVTMSVFAMAAVFYGFGAFFETFKANASAGTGQGYELDAIASCVVGGISFNGGIGKLEGAVVGVIIFTGLTYCLTFLGIDTNLQFVFKGLIIIAAVALDSVKYLKRR.

10 consecutive transmembrane segments (helical) span residues 193–213, 239–259, 267–287, 300–320, 326–346, 376–396, 424–444, 461–481, 483–503, and 505–525; these read FFLANGLYIAIAVFFIACIVV, MFYAVGVAGIILLAGTDLSIG, VVTGIILHPGQNIVTFFGLGP, VMSLAVSVALCVSFSLFAGFF, IHPFISTLATQLIIYGVLFFG, LVTFPKLIIPATIAVAIAWFI, FGVTMSVFAMAAVFYGFGAFF, LDAIASCVVGGISFNGGIGKL, GAVVGVIIFTGLTYCLTFLGI, and TNLQFVFKGLIIIAAVALDSV.

Belongs to the binding-protein-dependent transport system permease family. AraH/RbsC subfamily. The complex is composed of one ATP-binding protein (MglA), two transmembrane proteins (MglC) and a solute-binding protein (MglB).

Its subcellular location is the cell membrane. Functionally, part of the ABC transporter complex MglABC involved in galactose/methyl galactoside import. Probably responsible for the translocation of the substrate across the membrane. The sequence is that of Galactose/methyl galactoside import permease protein MglC (mglC) from Treponema pallidum (strain Nichols).